A 391-amino-acid polypeptide reads, in one-letter code: Phosphoprotein (391 aa).

Phosphothreonine is present on residues Thr-10 and Thr-16. Residues 54–65 (QKNIQHPTASHQ) show a composition bias toward polar residues. 2 disordered regions span residues 54-98 (QKNI…EPLF) and 145-186 (TSTP…RSGS). Residue Ser-69 is modified to Phosphoserine. Thr-91, Thr-150, and Thr-165 each carry phosphothreonine. Position 188 is a phosphoserine (Ser-188). Residues 218 to 245 (ANEIMDLLRGMDARLQHLEQKVDKVLAQ) adopt a coiled-coil conformation. Thr-250 carries the phosphothreonine modification. Ser-257 is subject to Phosphoserine. Phosphothreonine is present on residues Thr-258 and Thr-282. Phosphoserine is present on residues Ser-292 and Ser-294. Thr-298 bears the Phosphothreonine mark. Phosphoserine is present on residues Ser-301 and Ser-374. The tract at residues 343-391 (AGRKVMITKMITDCVANPQMKQAFEQRLAKASTEDALNDIKRDIIRNAI) is interaction with the nucleoprotein. Phosphothreonine is present on Thr-375.

This sequence belongs to the rubulavirus/avulavirus P protein family. As to quaternary structure, homotetramer. Interacts (via multimerization domain) with polymerase L; this interaction forms the polymerase L-P complex. Interacts (via N-terminus) with N0 (via Ncore); this interaction allows P to chaperon N0 to avoid N polymerization before encapsidation. Interacts (via C-terminus) with N-RNA template; this interaction positions the polymerase on the template for both transcription and replication. Interacts with host RPS6KB1 kinase; this interaction may play a role in the viral replication and transcription.

Its subcellular location is the virion. Functionally, essential cofactor of the RNA polymerase L that plays a central role in the transcription and replication by forming the polymerase complex with RNA polymerase L and recruiting L to the genomic N-RNA template for RNA synthesis. Also plays a central role in the encapsidation of nascent RNA chains by forming the encapsidation complex with the nucleocapsid protein N (N-P complex). Acts as a chaperone for newly synthesized free N protein, so-called N0, allowing encapsidation of nascent RNA chains during replication. The nucleoprotein protein N prevents excessive phosphorylation of P, which leads to down-regulation of viral transcription/ replication. Participates, together with N, in the formation of viral factories (viroplasms), which are large inclusions in the host cytoplasm where replication takes place. This Mumps virus genotype N (strain L-Zagreb vaccine) (MuV) protein is Phosphoprotein.